Reading from the N-terminus, the 246-residue chain is YjeF N-terminal domain-containing 3 (246 aa).

The region spanning 24–234 (VATVETELLR…DIQKKYELNL (211 aa)) is the YjeF N-terminal domain.

Interacts with apoa1a. Binds to high-density lipoprotein.

Accelerates cholesterol efflux from endothelial cells to high-density lipoprotein (HDL) and thereby regulates angiogenesis. Orchestrates hematopoietic stem and progenitor cell emergence from the hemogenic endothelium, a type of specialized endothelium manifesting hematopoietic potential. YJEFN3-mediated cholesterol efflux activates endothelial SREBF2, the master transcription factor for cholesterol biosynthesis, which in turn transactivates NOTCH and promotes hematopoietic stem and progenitor cell emergence. This chain is YjeF N-terminal domain-containing 3, found in Danio rerio (Zebrafish).